The sequence spans 131 residues: ATP synthase epsilon chain (131 aa).

This sequence belongs to the ATPase epsilon chain family. F-type ATPases have 2 components, CF(1) - the catalytic core - and CF(0) - the membrane proton channel. CF(1) has five subunits: alpha(3), beta(3), gamma(1), delta(1), epsilon(1). CF(0) has three main subunits: a, b and c.

It is found in the cell membrane. Produces ATP from ADP in the presence of a proton gradient across the membrane. The sequence is that of ATP synthase epsilon chain from Bacillus licheniformis (strain ATCC 14580 / DSM 13 / JCM 2505 / CCUG 7422 / NBRC 12200 / NCIMB 9375 / NCTC 10341 / NRRL NRS-1264 / Gibson 46).